Consider the following 238-residue polypeptide: CS1 fimbrial subunit B (238 aa).

An N-terminal signal peptide occupies residues 1-17; sequence MRKLFLSLLMIPFVAKA.

It is found in the fimbrium. Might function as a shuttle protein in the transport of fimbria through the periplasmic space or might function as an adhesin. The protein is CS1 fimbrial subunit B (csoB) of Escherichia coli.